We begin with the raw amino-acid sequence, 66 residues long: Large ribosomal subunit protein uL29 (66 aa).

The protein belongs to the universal ribosomal protein uL29 family.

The protein is Large ribosomal subunit protein uL29 of Borrelia duttonii (strain Ly).